The sequence spans 258 residues: Short-chain dehydrogenase chyC (258 aa).

NADP(+) contacts are provided by arginine 37, aspartate 55, asparagine 81, tyrosine 154, lysine 158, valine 185, and threonine 187. The active-site Proton donor is the tyrosine 154. Lysine 158 functions as the Lowers pKa of active site Tyr in the catalytic mechanism.

This sequence belongs to the short-chain dehydrogenases/reductases (SDR) family.

Functionally, short-chain dehydrogenase; part of the gene cluster that mediates the biosynthesis of the yellow pigment chrysogine. the NRPS chyA mediates the condensation of anthranilic acid and alanine into the intermediate 2-(2-aminopropanamido)benzoic acid. The remainder of the pathway is highly branched yielding at least 13 chrysogine-related compounds. The malonyl transferase chyE converts 2-(2-aminopropanamido)benzoic acid and 2-(2-aminopropanamido)benzamidine into 2-(2-(2-carboxyacetamido)propanamido)benzoic acid and 3-((1-((2-carbamoylphenyl)amino)-1-oxopropan-2-yl)amino)-3-oxopropanoic acid, respectively. ChyD is an amidase, being responsible for the amidation of the carboxylic acid moiety of 2-(2-aminopropanamido)benzoic acid, 2-(2-(2-carboxyacetamido)propanamido)benzoic acid and 2-(2-((4-amino-1-carboxy-4-oxobutyl)amino)propanamido)benzoic acid. ChyC is involved in the same reactions as ChyD, but plays a more minor role in the amidation reactions compared to chyD. The oxidoreductases chyH and chyM are involved in oxidation reactions that form N-pyruvoylanthranilamide from 2-(2-aminopropanamido)benzamidine and (1-((2-carbamoylphenyl)amino)-1-oxopropan-2-yl)glutamine, respectively. N-pyruvoylanthranilamide is further converted via two further branches in the pathway, yielding chrysogine and additional chrysogine-related coumpounds. Chrysogine is likely formed by a spontaneous ring closure from N-pyruvoylanthranilamide. This chain is Short-chain dehydrogenase chyC, found in Penicillium rubens (strain ATCC 28089 / DSM 1075 / NRRL 1951 / Wisconsin 54-1255) (Penicillium chrysogenum).